Reading from the N-terminus, the 623-residue chain is Putative ABC transporter ATP-binding protein MG014 homolog (623 aa).

The ABC transmembrane type-1 domain maps to 16 to 325 (LILAPLFTFA…YIVLGLILTS (310 aa)). Transmembrane regions (helical) follow at residues 27 to 47 (IIIDLIIPSFLASAIAVVFSI), 86 to 106 (VILLALFGLVFGLISIFCASI), 157 to 177 (FLRLIVRAPFLFIGGLAFAIA), 180 to 200 (SDMSISLAITFPLTFLVIGIL), 266 to 286 (NIPFTFFFSSMTIIIALLLVF), and 307 to 327 (IFAFFQYNFYIVLGLILTSLT). Positions 365-611 (LEFKNVAFGL…CDIYVKMKQA (247 aa)) constitute an ABC transporter domain. 400-407 (GPTGSGKS) is an ATP binding site.

This sequence belongs to the ABC transporter superfamily.

It localises to the cell membrane. In Mycoplasma pneumoniae (strain ATCC 29342 / M129 / Subtype 1) (Mycoplasmoides pneumoniae), this protein is Putative ABC transporter ATP-binding protein MG014 homolog.